The sequence spans 487 residues: MRVETHSPSFTNPNPAEACSGDPTEMGSRLSGVSRAPLPHAAAGRDGEAAAAGKIGAFLRKAVAAQSYGLMFANGKLFEATGDALEKREQYGFSALKRLDGLSRRNLDAVAARLGALDSAEQALKQHIMAGAWHFRHQSNAALDDGEKATIASNHLLSRQARSSGGNTFADDKALLSNHDFVFFGVEFSGRDKNDKPLNHKHSTMDFGANAYVVSDALPACRNGYLTLTDHFFNRVPGGREAEHQDFVGRFAQMGRESGRWIHEGKYRQNAPLFCYRDMKAAVALHLIEFMRNSQDEAFKAYVFDQATQSGPALDRVLNSVFQAEFHIPRLMATTDYAKHPLRPMLLKEAVDSVNLPALSDLVSNRGDAVTAMWHAINKGKDEVVAYLLGNWQFEAKDFSHAPAGFYHELNYALSESGASVYILDQFLSRGWAAVNAPFEHVNRGDTMLDNAVKYGNREMVAALIKHGADRNLLSKWHKSDLDALLA.

The segment covering 1-14 (MRVETHSPSFTNPN) has biased composition (polar residues). The segment at 1–41 (MRVETHSPSFTNPNPAEACSGDPTEMGSRLSGVSRAPLPHA) is disordered. Positions 137, 138, 139, 164, 167, and 168 each coordinate NAD(+). Residue E325 is part of the active site. 2 ANK repeats span residues 368-398 (DAVT…EAKD) and 444-473 (RGDT…DRNL).

The protein belongs to the OspC family.

It is found in the secreted. Its subcellular location is the host cytoplasm. It catalyses the reaction L-arginyl-[protein] + NAD(+) = ADP-riboxanated L-argininyl-[protein] + nicotinamide + NH4(+) + H(+). Functionally, ADP-riboxanase effector that inhibits host cell pyroptosis. Acts by mediating arginine ADP-riboxanation of host CASP4/CASP11, blocking CASP4/CASP11 autoprocessing. This prevents CASP4 activation and ability to recognize and cleave GSDMD, thereby inhibiting LPS-induced pyroptosis. ADP-riboxanation takes place in two steps: OspC3 first catalyzes ADP-ribosylation of target Arg, and then initiates a deamination to remove one N-omega group. This chain is Arginine ADP-riboxanase OspC3, found in Chromobacterium sp. (strain ATCC 53434 / SC 14030).